The following is a 648-amino-acid chain: Primary amine oxidase (648 aa).

The propeptide occupies 1–9 (MTLNAESEA). 299 to 310 (AFDSGEYNIGNM) is a binding site for substrate. Residue Asp-301 is the Proton acceptor of the active site. The cysteines at positions 320 and 346 are disulfide-linked. Position 382–387 (382–387 (VANYEY)) interacts with substrate. Tyr-385 (schiff-base intermediate with substrate; via topaquinone) is an active-site residue. A 2',4',5'-topaquinone modification is found at Tyr-385. Residues His-436 and His-438 each coordinate Cu cation. Asp-445, Phe-446, and Asp-584 together coordinate Mn(2+). Residue His-595 coordinates Cu cation.

Belongs to the copper/topaquinone oxidase family. Homodimer. The cofactor is Cu cation. Zn(2+) is required as a cofactor. L-topaquinone serves as cofactor. Requires Mn(2+) as cofactor. Topaquinone (TPQ) is generated by copper-dependent autoxidation of a specific tyrosyl residue.

The catalysed reaction is a primary methyl amine + O2 + H2O = an aldehyde + H2O2 + NH4(+). The exact function of MaoXI is not known. This chain is Primary amine oxidase (maoI), found in Arthrobacter sp. (strain P1).